Consider the following 730-residue polypeptide: GTPase-activating protein GYP7 (730 aa).

Residues 434 to 619 enclose the Rab-GAP TBC domain; the sequence is VQEDKERDDF…RLWEVLWTDY (186 aa).

Its function is as follows. Most effectively accelerate the intrinsic GTPase activity of YPT7. It is also active, but to a lesser extent, on YPT31, YPT32 and YPT1. YPT6 and SEC4. This chain is GTPase-activating protein GYP7 (GYP7), found in Yarrowia lipolytica (strain CLIB 122 / E 150) (Yeast).